We begin with the raw amino-acid sequence, 546 residues long: MTTRYIFVTGGVVSSLGKGIAAASLAAILEARGLNVTIMKLDPYINVDPGTMSPTQHGEVFVTEDGAETDLDLGHYERFIRTKMNRRNNFTTGRIYEEVLRKERRGDYLGATIQVIPHITNAIKEKVIAGGEGHDVAIVEIGGTVGDIESLPFLESIRQLGVELGRDRTLFMHLTLVPFLGAAGEVKTKPTQHSVKELRSIGIAPDVLICRGDRAIPANERAKISLFCNVEERAVISLKDVDSIYKIPALLRSQGLDDLVVKRFGLECREADLSEWENVIYQEANPNGEVVIGMVGKYIELPDAYKSVNEALKHAGLKNRVSVSIKYIDSQTVEAKGDEVLQGLDGILVPGGFGERGVEGKILAAKYARENELPYFGICLGMQVALIEFARNVAGMTDAHSTEFNKATPFPVVGLITEWVDEEGNVEQRHEASDLGGTMRLGAQLCHLLEGSKAAQAYKGNTCVERHRHRYEVNNKYRERLEQAGLVFSGLSSDRKLVEMIELKDHPWFVAGQFHPEFTSTPRDGHPLFEGFVAAASAHQKRDLKK.

The segment at 1 to 266 is amidoligase domain; the sequence is MTTRYIFVTG…DDLVVKRFGL (266 aa). A CTP-binding site is contributed by Ser14. Ser14 serves as a coordination point for UTP. ATP-binding positions include 15–20 and Asp72; that span reads SLGKGI. Residues Asp72 and Glu140 each contribute to the Mg(2+) site. Residues 147 to 149, 187 to 192, and Lys223 each bind CTP; these read DIE and KTKPTQ. UTP is bound by residues 187 to 192 and Lys223; that span reads KTKPTQ. 239-241 is a binding site for ATP; the sequence is KDV. The 252-residue stretch at 291–542 folds into the Glutamine amidotransferase type-1 domain; sequence VIGMVGKYIE…VAAASAHQKR (252 aa). Residue Gly352 participates in L-glutamine binding. Cys379 (nucleophile; for glutamine hydrolysis) is an active-site residue. L-glutamine-binding positions include 380 to 383, Glu403, and Arg470; that span reads LGMQ. Residues His515 and Glu517 contribute to the active site.

This sequence belongs to the CTP synthase family. As to quaternary structure, homotetramer.

The enzyme catalyses UTP + L-glutamine + ATP + H2O = CTP + L-glutamate + ADP + phosphate + 2 H(+). The catalysed reaction is L-glutamine + H2O = L-glutamate + NH4(+). It carries out the reaction UTP + NH4(+) + ATP = CTP + ADP + phosphate + 2 H(+). The protein operates within pyrimidine metabolism; CTP biosynthesis via de novo pathway; CTP from UDP: step 2/2. With respect to regulation, allosterically activated by GTP, when glutamine is the substrate; GTP has no effect on the reaction when ammonia is the substrate. The allosteric effector GTP functions by stabilizing the protein conformation that binds the tetrahedral intermediate(s) formed during glutamine hydrolysis. Inhibited by the product CTP, via allosteric rather than competitive inhibition. Functionally, catalyzes the ATP-dependent amination of UTP to CTP with either L-glutamine or ammonia as the source of nitrogen. Regulates intracellular CTP levels through interactions with the four ribonucleotide triphosphates. This chain is CTP synthase, found in Shewanella sp. (strain ANA-3).